A 193-amino-acid polypeptide reads, in one-letter code: MASLIFTYAAMNAGKSASLLIAAHNYKERGMSVLVLKPAIDTRDSVCEVVSRIGIKQEANIITDDMDIFEFYKWAEAQKDIHCVFVDEAQFLKTEQVHQLSRIVDTYNVPVMAYGLRTDFAGKLFEGSKELLAIADKLIELKAVCHCGKKAIMTARLMEDGTPVKEGNQICIGDEIYVSLCRKHWNELTKKLG.

9-16 (AAMNAGKS) contributes to the ATP binding site.

It belongs to the thymidine kinase family.

The enzyme catalyses thymidine + ATP = dTMP + ADP + H(+). This thymidine kinase is one of the enzymes that catalyze DNA precursor synthesis. Although tk is a nonessential gene, some strains of host E.coli do not support the growth of phages that lack this gene. The chain is Thymidine kinase (TK) from Escherichia coli (Bacteriophage T4).